The following is a 264-amino-acid chain: Spermidine/putrescine transport system permease protein PotC (264 aa).

Residues 1 to 7 are Cytoplasmic-facing; sequence MIGRLLR. A helical transmembrane segment spans residues 8-27; sequence GGFMTAIYAYLYIPIIILIV. Residues 28 to 65 lie on the Periplasmic side of the membrane; it reads NSFNSSRFGINWQGFTTKWYSLLMNNDSLLQAAQHSLT. Residues 60–248 form the ABC transmembrane type-1 domain; the sequence is AQHSLTMAVF…VLSLVMVIAS (189 aa). The helical transmembrane segment at 66 to 85 threads the bilayer; the sequence is MAVFSATFATLIGSLTAVAL. Over 86–100 the chain is Cytoplasmic; the sequence is YRYRFRGKPFVSGML. The chain crosses the membrane as a helical span at residues 101–120; the sequence is FVVMMSPDIVMAISLLVLFM. The Periplasmic portion of the chain corresponds to 121–128; the sequence is LLGIQLGF. Residues 129-148 form a helical membrane-spanning segment; the sequence is WSLLFSHITFCLPFVVVTVY. Over 149 to 176 the chain is Cytoplasmic; sequence SRLKGFDVRMLEAAKDLGASEFTILRKI. A helical membrane pass occupies residues 177 to 196; sequence ILPLAMPAVAAGWVLSFTLS. Residues 197-231 lie on the Periplasmic side of the membrane; it reads MDDVVVSSFVTGPSYEILPLKIYSMVKVGVSPEVN. A helical transmembrane segment spans residues 232 to 251; the sequence is ALATILLVLSLVMVIASQLI. The Cytoplasmic segment spans residues 252-264; the sequence is ARDKTKGNTGDVK.

The protein belongs to the binding-protein-dependent transport system permease family. CysTW subfamily.

The protein localises to the cell inner membrane. Functionally, required for the activity of the bacterial periplasmic transport system of putrescine and spermidine. The polypeptide is Spermidine/putrescine transport system permease protein PotC (potC) (Escherichia coli O157:H7).